The following is a 236-amino-acid chain: MTQQFYVSPEQLMKDRADFARKGIARGKSVVVISCEDGIALVAENPSPSLHKIGEIYDKIAFAAVGKYNEFESLRQAGVRYADVRGYSYDREDVTARGLASVYAQSLGAVFTAEQKPFEVELAVAEVGATQAEDHLYRLTFDGSIADEHSFVVMGGQADRVASAIDQGWRASLGFPDAVRLALNGLAPAPETEETAKPVPARAIEVAVLDRHSEEVRGARRAFRRLNDADITALLA.

It belongs to the peptidase T1A family. As to quaternary structure, the 20S proteasome core is composed of 14 alpha and 14 beta subunits that assemble into four stacked heptameric rings, resulting in a barrel-shaped structure. The two inner rings, each composed of seven catalytic beta subunits, are sandwiched by two outer rings, each composed of seven alpha subunits. The catalytic chamber with the active sites is on the inside of the barrel. Has a gated structure, the ends of the cylinder being occluded by the N-termini of the alpha-subunits. Is capped by the proteasome-associated ATPase, ARC.

The protein resides in the cytoplasm. It participates in protein degradation; proteasomal Pup-dependent pathway. The formation of the proteasomal ATPase ARC-20S proteasome complex, likely via the docking of the C-termini of ARC into the intersubunit pockets in the alpha-rings, may trigger opening of the gate for substrate entry. Interconversion between the open-gate and close-gate conformations leads to a dynamic regulation of the 20S proteasome proteolysis activity. Functionally, component of the proteasome core, a large protease complex with broad specificity involved in protein degradation. The protein is Proteasome subunit alpha of Pseudarthrobacter chlorophenolicus (strain ATCC 700700 / DSM 12829 / CIP 107037 / JCM 12360 / KCTC 9906 / NCIMB 13794 / A6) (Arthrobacter chlorophenolicus).